The chain runs to 223 residues: Large ribosomal subunit protein uL6c (223 aa).

Residues 1–41 (MASSLVSSFQPRSAFLGDRNVFKVSSTPFAQVGYSSKTIEC) constitute a chloroplast transit peptide.

This sequence belongs to the universal ribosomal protein uL6 family. In terms of assembly, part of the 50S ribosomal subunit.

The protein resides in the plastid. It is found in the chloroplast. Functionally, this protein binds directly to 23S ribosomal RNA and is located at the aminoacyl-tRNA binding site of the peptidyltransferase center. In Arabidopsis thaliana (Mouse-ear cress), this protein is Large ribosomal subunit protein uL6c (RPL6).